The following is a 251-amino-acid chain: MSLPATFDLTPEDAQLLLAANVHLGSKNVQVHQEPYVFKTRPDGVNVVNVGKTWEKIVLAARIIAAIPNPEDVVAISSRTYGQRAVLKFSAHTGATAIAGRFTPGSFTNYITRSFKEPRLVIVTDPRSDAQAIKESSYVNIPVIALTDLDSPSEYVDVAIPCNNKGKHSIGLIWYLLAREVLRLRGSLVDRTQPWSIMPDLYFYRDPEEVDQQVAEEATAAADEDVKEEVAEEQTEAADWAEGNTEEVASW.

Ser2 is modified (N-acetylserine). Positions 213–251 are disordered; it reads QVAEEATAAADEDVKEEVAEEQTEAADWAEGNTEEVASW. The segment covering 222 to 236 has biased composition (acidic residues); the sequence is ADEDVKEEVAEEQTE.

It belongs to the universal ribosomal protein uS2 family. As to quaternary structure, component of the small ribosomal subunit. Mature ribosomes consist of a small (40S) and a large (60S) subunit. The 40S subunit contains about 33 different proteins and 1 molecule of RNA (18S). The 60S subunit contains about 49 different proteins and 3 molecules of RNA (25S, 5.8S and 5S). Interacts with RPS21.

The protein resides in the cytoplasm. Its function is as follows. Required for the assembly and/or stability of the 40S ribosomal subunit. Required for the processing of the 20S rRNA-precursor to mature 18S rRNA in a late step of the maturation of 40S ribosomal subunits. The protein is Small ribosomal subunit protein uS2 of Lachancea thermotolerans (strain ATCC 56472 / CBS 6340 / NRRL Y-8284) (Yeast).